The primary structure comprises 446 residues: Signal recognition particle 54 kDa protein (446 aa).

GTP-binding positions include 104–111 (GLQGSGKT), 184–188 (DTAGR), and 242–245 (TKMD).

The protein belongs to the GTP-binding SRP family. SRP54 subfamily. As to quaternary structure, part of the signal recognition particle protein translocation system, which is composed of SRP and FtsY. Archaeal SRP consists of a 7S RNA molecule of 300 nucleotides and two protein subunits: SRP54 and SRP19.

The protein resides in the cytoplasm. The catalysed reaction is GTP + H2O = GDP + phosphate + H(+). Its function is as follows. Involved in targeting and insertion of nascent membrane proteins into the cytoplasmic membrane. Binds to the hydrophobic signal sequence of the ribosome-nascent chain (RNC) as it emerges from the ribosomes. The SRP-RNC complex is then targeted to the cytoplasmic membrane where it interacts with the SRP receptor FtsY. The polypeptide is Signal recognition particle 54 kDa protein (Methanocorpusculum labreanum (strain ATCC 43576 / DSM 4855 / Z)).